Consider the following 158-residue polypeptide: Ribosome maturation factor RimP (158 aa).

It belongs to the RimP family.

It is found in the cytoplasm. Its function is as follows. Required for maturation of 30S ribosomal subunits. The polypeptide is Ribosome maturation factor RimP (Pediococcus pentosaceus (strain ATCC 25745 / CCUG 21536 / LMG 10740 / 183-1w)).